We begin with the raw amino-acid sequence, 672 residues long: uncharacterized protein (672 aa).

It belongs to the MG032/MG096/MG288 family.

This is an uncharacterized protein from Mycoplasma pneumoniae (strain ATCC 29342 / M129 / Subtype 1) (Mycoplasmoides pneumoniae).